The primary structure comprises 715 residues: Protein DENND6 homolog (715 aa).

A coiled-coil region spans residues 13–58; it reads MIFKEEEIKKQQILLEKEEKEKQEQQQKKLNKDNIFKLEEEGKKLE. Residues 96–273 form the uDENN domain; the sequence is NSFCIINFDL…VKQHQLGGGS (178 aa). Disordered regions lie at residues 269–296 and 392–416; these read LGGG…SNTT and SGTR…NNNN. The cDENN domain maps to 299–476; that stretch reads SPSIWSEMKL…KDLLTRHVLD (178 aa). Low complexity predominate over residues 399–416; the sequence is SNNNNNQDDSEYNNNNNN. Residues 478–600 enclose the dDENN domain; that stretch reads KEKILSEYKP…KQWLDDKRAQ (123 aa).

This sequence belongs to the DENND6 family.

This is Protein DENND6 homolog from Dictyostelium discoideum (Social amoeba).